Here is a 201-residue protein sequence, read N- to C-terminus: uncharacterized protein (201 aa).

Disordered stretches follow at residues 46–80 (PLVN…SYDE) and 143–201 (SSTS…ANPA). 2 stretches are compositionally biased toward polar residues: residues 64–78 (GSQN…SQSY) and 143–167 (SSTS…NSPA).

This is an uncharacterized protein from Legionella pneumophila.